The sequence spans 944 residues: Neutral alpha-glucosidase AB (944 aa).

An N-terminal signal peptide occupies residues 1–32 (MAAVAAVAARRRRSWTGLVLACLGVCLGLTLA). Cysteines 41 and 47 form a disulfide. Position 52 is a phosphoserine (Ser-52). An N-linked (GlcNAc...) asparagine glycan is attached at Asn-97. Residues 181–225 (QRAPRVSQGSKDPAEGDGAQPEEAPGDGDKPEEIQGKAEKDEPGA) are disordered. Positions 207–225 (DGDKPEEIQGKAEKDEPGA) are enriched in basic and acidic residues. Asp-283 and Asp-429 together coordinate substrate. The Nucleophile role is filled by Asp-542. Position 602 (Arg-602) interacts with substrate. Catalysis depends on Asp-618, which acts as the Proton donor. A disulfide bond links Cys-633 and Cys-644. His-676 is a substrate binding site.

This sequence belongs to the glycosyl hydrolase 31 family. Heterodimer of a catalytic alpha subunit (GANAB) and a beta subunit (PRKCSH). Binds glycosylated PTPRC. Post-translationally, contains sialylated polysaccharide chains.

The protein resides in the endoplasmic reticulum. Its subcellular location is the golgi apparatus. It localises to the melanosome. It catalyses the reaction N(4)-(alpha-D-Glc-(1-&gt;3)-alpha-D-Man-(1-&gt;2)-alpha-D-Man-(1-&gt;2)-alpha-D-Man-(1-&gt;3)-[alpha-D-Man-(1-&gt;2)-alpha-D-Man-(1-&gt;3)-[alpha-D-Man-(1-&gt;2)-alpha-D-Man-(1-&gt;6)]-alpha-D-Man-(1-&gt;6)]-beta-D-Man-(1-&gt;4)-beta-D-GlcNAc-(1-&gt;4)-beta-D-GlcNAc)-L-asparaginyl-[protein] + H2O = N(4)-(alpha-D-Man-(1-&gt;2)-alpha-D-Man-(1-&gt;2)-alpha-D-Man-(1-&gt;3)-[alpha-D-Man-(1-&gt;2)-alpha-D-Man-(1-&gt;3)-[alpha-D-Man-(1-&gt;2)-alpha-D-Man-(1-&gt;6)]-alpha-D-Man-(1-&gt;6)]-beta-D-Man-(1-&gt;4)-beta-D-GlcNAc-(1-&gt;4)-beta-D-GlcNAc)-L-asparaginyl-[protein] (N-glucan mannose isomer 9A1,2,3B1,2,3) + beta-D-glucose. It carries out the reaction N(4)-(alpha-D-Glc-(1-&gt;3)-alpha-D-Glc-(1-&gt;3)-alpha-D-Man-(1-&gt;2)-alpha-D-Man-(1-&gt;2)-alpha-D-Man-(1-&gt;3)-[alpha-D-Man-(1-&gt;2)-alpha-D-Man-(1-&gt;3)-[alpha-D-Man-(1-&gt;2)-alpha-D-Man-(1-&gt;6)]-alpha-D-Man-(1-&gt;6)]-beta-D-Man-(1-&gt;4)-beta-D-GlcNAc-(1-&gt;4)-beta-D-GlcNAc)-L-asparaginyl-[protein] + H2O = N(4)-(alpha-D-Glc-(1-&gt;3)-alpha-D-Man-(1-&gt;2)-alpha-D-Man-(1-&gt;2)-alpha-D-Man-(1-&gt;3)-[alpha-D-Man-(1-&gt;2)-alpha-D-Man-(1-&gt;3)-[alpha-D-Man-(1-&gt;2)-alpha-D-Man-(1-&gt;6)]-alpha-D-Man-(1-&gt;6)]-beta-D-Man-(1-&gt;4)-beta-D-GlcNAc-(1-&gt;4)-beta-D-GlcNAc)-L-asparaginyl-[protein] + beta-D-glucose. The protein operates within glycan metabolism; N-glycan metabolism. Its function is as follows. Catalytic subunit of glucosidase II that cleaves sequentially the 2 innermost alpha-1,3-linked glucose residues from the Glc(2)Man(9)GlcNAc(2) oligosaccharide precursor of immature glycoproteins. Required for PKD1/Polycystin-1 and PKD2/Polycystin-2 maturation and localization to the cell surface and cilia. The sequence is that of Neutral alpha-glucosidase AB (GANAB) from Sus scrofa (Pig).